Here is a 156-residue protein sequence, read N- to C-terminus: Arginine repressor (156 aa).

Belongs to the ArgR family.

It is found in the cytoplasm. The protein operates within amino-acid biosynthesis; L-arginine biosynthesis [regulation]. In terms of biological role, regulates arginine biosynthesis genes. The protein is Arginine repressor of Vibrio vulnificus (strain CMCP6).